Here is a 360-residue protein sequence, read N- to C-terminus: Transcriptional coactivator MYCFIDRAFT_190109 (360 aa).

The 65-residue stretch at 3-67 (GMALNQLLAC…GFLHEPRPGQ (65 aa)) folds into the HTH iclR-type domain. The segment at residues 33 to 52 (ARDVADLTGVPETQLCRVVR) is a DNA-binding region (H-T-H motif).

It localises to the nucleus. In terms of biological role, transcriptional coactivator; part of the gene cluster that mediates the biosynthesis of an emodin derivative that may be involved in black Sigatoka disease of banana. With MYCFIDRAFT_198930, coregulates the production of the PKS8-1 cluster product. In Pseudocercospora fijiensis (strain CIRAD86) (Black leaf streak disease fungus), this protein is Transcriptional coactivator MYCFIDRAFT_190109.